A 209-amino-acid polypeptide reads, in one-letter code: Thiamine-phosphate synthase (209 aa).

4-amino-2-methyl-5-(diphosphooxymethyl)pyrimidine-binding positions include Q36–K40 and N68. Mg(2+) is bound by residues D69 and D88. S107 contributes to the 4-amino-2-methyl-5-(diphosphooxymethyl)pyrimidine binding site. Position 133–135 (T133–S135) interacts with 2-[(2R,5Z)-2-carboxy-4-methylthiazol-5(2H)-ylidene]ethyl phosphate. K136 lines the 4-amino-2-methyl-5-(diphosphooxymethyl)pyrimidine pocket. 2-[(2R,5Z)-2-carboxy-4-methylthiazol-5(2H)-ylidene]ethyl phosphate contacts are provided by residues G164 and I184–T185.

It belongs to the thiamine-phosphate synthase family. It depends on Mg(2+) as a cofactor.

The enzyme catalyses 2-[(2R,5Z)-2-carboxy-4-methylthiazol-5(2H)-ylidene]ethyl phosphate + 4-amino-2-methyl-5-(diphosphooxymethyl)pyrimidine + 2 H(+) = thiamine phosphate + CO2 + diphosphate. The catalysed reaction is 2-(2-carboxy-4-methylthiazol-5-yl)ethyl phosphate + 4-amino-2-methyl-5-(diphosphooxymethyl)pyrimidine + 2 H(+) = thiamine phosphate + CO2 + diphosphate. It carries out the reaction 4-methyl-5-(2-phosphooxyethyl)-thiazole + 4-amino-2-methyl-5-(diphosphooxymethyl)pyrimidine + H(+) = thiamine phosphate + diphosphate. The protein operates within cofactor biosynthesis; thiamine diphosphate biosynthesis; thiamine phosphate from 4-amino-2-methyl-5-diphosphomethylpyrimidine and 4-methyl-5-(2-phosphoethyl)-thiazole: step 1/1. In terms of biological role, condenses 4-methyl-5-(beta-hydroxyethyl)thiazole monophosphate (THZ-P) and 2-methyl-4-amino-5-hydroxymethyl pyrimidine pyrophosphate (HMP-PP) to form thiamine monophosphate (TMP). This chain is Thiamine-phosphate synthase, found in Shouchella clausii (strain KSM-K16) (Alkalihalobacillus clausii).